Reading from the N-terminus, the 321-residue chain is High osmolarity signaling protein SHO1A (321 aa).

Residues 1-28 are Cytoplasmic-facing; the sequence is MDYNNNRYGGGGGGSKFNLGHIVGDPFS. Residues 29-49 form a helical membrane-spanning segment; sequence LATIAIATAGWLIAFVSSIIA. At 50–58 the chain is on the extracellular side; the sequence is NIDQEYPNY. Asn-57 carries N-linked (GlcNAc...) asparagine glycosylation. A helical membrane pass occupies residues 59–79; that stretch reads SWWALAYMFFVILGVTFAVAA. Asn-80 is a topological domain (cytoplasmic). Residues 81-101 form a helical membrane-spanning segment; it reads AVYTYHVAMVGFLAAGLVFTT. Residues 102-116 are Extracellular-facing; it reads SSVNSLIYWSDKAKQ. Residues 117 to 137 traverse the membrane as a helical segment; it reads AAAAGFILLSMVSIVWIFYFG. Residues 138-321 lie on the Cytoplasmic side of the membrane; the sequence is SQPTASHRQT…IAPSNYLILL (184 aa). Disordered regions lie at residues 155 to 181 and 194 to 261; these read KDHA…AQHP and TSSP…QQPT. 2 stretches are compositionally biased toward polar residues: residues 165–181 and 225–237; these read HMTQ…AQHP and NFSN…PITS. The span at 238–249 shows a compositional bias: low complexity; sequence QNNPQNQHQQPQ. A compositionally biased stretch (polar residues) spans 250-261; that stretch reads DLTSPSTTQQPT. Residues 262 to 321 enclose the SH3 domain; that stretch reads EYPYRAKAIYSYEANPDDANEISFNKHEILEVSDVSGRWWQAKKENGETGIAPSNYLILL.

The protein belongs to the SHO1 family. In terms of assembly, forms homooligomers.

The protein resides in the cell membrane. Its function is as follows. Plasma membrane osmosensor that activates the high osmolarity glycerol (HOG) MAPK signaling pathway in response to high osmolarity. This Hortaea werneckii protein is High osmolarity signaling protein SHO1A (SHO1A).